We begin with the raw amino-acid sequence, 415 residues long: MSVLETFDPAVAEVIRHETERQEYNLELIASENFVSPAVLEAQGSVLTNKYAEGYPGKRYYGGCHCVDVVENLAIDRAKELFGADHVNVQPHSGSQANMAVYFSVLKPGDTVLGMNLAHGGHLTHGSPVNFSGKLFNIVPYGVSKETQTIDYEETERLALEHKPKMIVVGASAYPRIIDFEAFRRIADKVGAVVMVDMAHIAGLVAAGLHPSPVPYAEFVTTTTHKTLRGPRGGMIMCREEWAKTLNSNIFPGIQGGPLMHVIAAKAVAFKEALTPEFKKYQEQIVKNAKALAEGLTKRGFKLTSGGTDNHLMLVDLSQTELTGKVAEEALDRAGITVNKNGIPFDTRSPFITSGIRIGTPAATSHGLKEAEMEQVAGFIADVLGNVTDEAKLAAVKTQVNALMKRFPMYADRLA.

Residues Leu117 and 121-123 (GHL) each bind (6S)-5,6,7,8-tetrahydrofolate. The residue at position 226 (Lys226) is an N6-(pyridoxal phosphate)lysine. 349-351 (SPF) is a (6S)-5,6,7,8-tetrahydrofolate binding site.

The protein belongs to the SHMT family. As to quaternary structure, homodimer. Pyridoxal 5'-phosphate serves as cofactor.

The protein localises to the cytoplasm. It carries out the reaction (6R)-5,10-methylene-5,6,7,8-tetrahydrofolate + glycine + H2O = (6S)-5,6,7,8-tetrahydrofolate + L-serine. Its pathway is one-carbon metabolism; tetrahydrofolate interconversion. It functions in the pathway amino-acid biosynthesis; glycine biosynthesis; glycine from L-serine: step 1/1. Its function is as follows. Catalyzes the reversible interconversion of serine and glycine with tetrahydrofolate (THF) serving as the one-carbon carrier. This reaction serves as the major source of one-carbon groups required for the biosynthesis of purines, thymidylate, methionine, and other important biomolecules. Also exhibits THF-independent aldolase activity toward beta-hydroxyamino acids, producing glycine and aldehydes, via a retro-aldol mechanism. In Geobacter sp. (strain M21), this protein is Serine hydroxymethyltransferase.